The following is a 266-amino-acid chain: Stomatin homolog PH1511 (266 aa).

The chain crosses the membrane as a helical span at residues 7–27 (FFVTSIILLFILIFLASAIKI). Coiled-coil stretches lie at residues 125–152 (GQAHLDELLSERDKLNMQLQRIIDEATD) and 178–213 (RQAEAERERRARITLAEAERQAAEKLREAAEIISEH).

It belongs to the band 7/mec-2 family. In terms of assembly, homotrimer. Interacts with PH1510 and is cleaved by PH1510.

Its subcellular location is the membrane. This is Stomatin homolog PH1511 from Pyrococcus horikoshii (strain ATCC 700860 / DSM 12428 / JCM 9974 / NBRC 100139 / OT-3).